A 1441-amino-acid chain; its full sequence is uncharacterized protein (1441 aa).

Disordered regions lie at residues 1-95, 150-204, 224-289, 401-477, 529-661, 680-760, 776-810, 849-899, 980-1118, 1161-1185, 1209-1321, 1348-1402, and 1421-1441; these read MGFL…EVIS, NGGI…QQQF, KPHQ…GEGE, HSNG…QLHQ, RHES…QPQQ, LNKD…KSQT, RKSS…HIQQ, QQQF…TQQL, RGGS…DNNN, KSLK…NENN, NIES…YRSY, GHNS…HIFF, and LKFN…SILE. The span at 19–38 shows a compositional bias: low complexity; it reads NDNSFDGGSSSYNNNNNNNN. Residues 39–56 show a composition bias toward polar residues; that stretch reads QPITYTPTAIRSPNNKTM. Low complexity-rich tracts occupy residues 57-91, 153-187, 227-283, 416-445, 555-564, and 572-635; these read SQSQ…GNGN, ISQP…TTTP, QQQQ…SLQN, NNNN…GINN, GNTDGVNIDN, and NNNN…TNNT. Polar residues predominate over residues 636 to 645; sequence ATPSVINGDS. Low complexity-rich tracts occupy residues 648–661 and 680–700; these read QEQP…QPQQ and LNKD…DDNN. The segment covering 703–720 has biased composition (basic and acidic residues); that stretch reads SREEMENILKKSQQDSNK. A compositionally biased stretch (polar residues) spans 729–751; it reads EDSNSGSPTFQDFQSSAAASNVS. Low complexity-rich tracts occupy residues 780–810 and 849–880; these read DSLN…HIQQ and QQQF…NSGS. Over residues 881–892 the composition is skewed to gly residues; that stretch reads INGGSNSGGGGV. Residues 981–994 show a composition bias toward polar residues; that stretch reads GGSTNRTTPPFLTP. A compositionally biased stretch (low complexity) spans 995 to 1067; sequence NTSQTNLSSL…NKQTANNTTN (73 aa). Over residues 1068 to 1087 the composition is skewed to polar residues; that stretch reads DFSFDQNTDLRSSTNSLTIG. The segment covering 1088-1118 has biased composition (low complexity); sequence SNSNFSSLKNSLNLENPENNNNPDKNVDNNN. Composition is skewed to low complexity over residues 1225–1249 and 1257–1291; these read DNNN…SLRN and NISN…NNNE. The segment covering 1362-1373 has biased composition (basic and acidic residues); the sequence is RHKDSIGDKEMD.

This is an uncharacterized protein from Dictyostelium discoideum (Social amoeba).